Consider the following 494-residue polypeptide: Prenylcysteine oxidase 1-like (494 aa).

A signal peptide spans 1–22; the sequence is MARAAPLLAALTALLAAAAAGG. N342 carries N-linked (GlcNAc...) asparagine glycosylation.

It belongs to the prenylcysteine oxidase family. FAD serves as cofactor.

The protein localises to the secreted. Its function is as follows. Likely to have oxidoreductase activity. Required in the mevalonate pathway to regulate prenylation and enhances the bactericidal activity of neutrophils. This chain is Prenylcysteine oxidase 1-like (PCYOX1L), found in Homo sapiens (Human).